The chain runs to 264 residues: Putative hydro-lyase Cgl2544/cg2803 (264 aa).

Belongs to the D-glutamate cyclase family.

The protein is Putative hydro-lyase Cgl2544/cg2803 of Corynebacterium glutamicum (strain ATCC 13032 / DSM 20300 / JCM 1318 / BCRC 11384 / CCUG 27702 / LMG 3730 / NBRC 12168 / NCIMB 10025 / NRRL B-2784 / 534).